The following is a 415-amino-acid chain: 3-isopropylmalate dehydratase large subunit (415 aa).

Residues Cys295, Cys353, and Cys356 each coordinate [4Fe-4S] cluster.

Belongs to the aconitase/IPM isomerase family. LeuC type 2 subfamily. Heterodimer of LeuC and LeuD. It depends on [4Fe-4S] cluster as a cofactor.

The enzyme catalyses (2R,3S)-3-isopropylmalate = (2S)-2-isopropylmalate. It functions in the pathway amino-acid biosynthesis; L-leucine biosynthesis; L-leucine from 3-methyl-2-oxobutanoate: step 2/4. Functionally, catalyzes the isomerization between 2-isopropylmalate and 3-isopropylmalate, via the formation of 2-isopropylmaleate. The chain is 3-isopropylmalate dehydratase large subunit from Pyrobaculum aerophilum (strain ATCC 51768 / DSM 7523 / JCM 9630 / CIP 104966 / NBRC 100827 / IM2).